Consider the following 212-residue polypeptide: Casparian strip membrane protein 1 (212 aa).

The tract at residues 1 to 28 is disordered; it reads MDSSNSTKETGDIPIPVTSSKSSKAAPP. At 1–49 the chain is on the cytoplasmic side; the sequence is MDSSNSTKETGDIPIPVTSSKSSKAAPPPVVAAKAKSTTKQPLVSGWKR. The segment covering 16–28 has biased composition (low complexity); the sequence is PVTSSKSSKAAPP. The helical transmembrane segment at 50–70 threads the bilayer; that stretch reads GLGIIDFILRICAIAAALAAA. Residues 71-100 are Extracellular-facing; that stretch reads TAMGTTSQQLPFFTQFFQFKADYNDLPAFT. Residues 101–121 form a helical membrane-spanning segment; sequence FFVIANAMAGAYLVLSLPFSI. The Cytoplasmic portion of the chain corresponds to 122 to 133; the sequence is LCIVRPHILGAR. The helical transmembrane segment at 134–154 threads the bilayer; that stretch reads LMLLVFDTVAVPLVTAAASAA. Residues 155–186 are Extracellular-facing; that stretch reads ASIVYLAHNGNSDANWVAICRQFNDFCQRVSG. The chain crosses the membrane as a helical span at residues 187-207; that stretch reads AVVASFITALLFVVLVAVSAV. Over 208–212 the chain is Cytoplasmic; that stretch reads ALRQK.

It belongs to the Casparian strip membrane proteins (CASP) family. Homodimer and heterodimers.

The protein resides in the cell membrane. Its function is as follows. Regulates membrane-cell wall junctions and localized cell wall deposition. Required for establishment of the Casparian strip membrane domain (CSD) and the subsequent formation of Casparian strips, a cell wall modification of the root endodermis that determines an apoplastic barrier between the intraorganismal apoplasm and the extraorganismal apoplasm and prevents lateral diffusion. The sequence is that of Casparian strip membrane protein 1 from Helianthus annuus (Common sunflower).